Here is a 293-residue protein sequence, read N- to C-terminus: Phosphatidylglycerol--prolipoprotein diacylglyceryl transferase (293 aa).

4 helical membrane-spanning segments follow: residues 45 to 65, 81 to 101, 115 to 135, and 144 to 164; these read FELR…YFVA, ELIF…YVLF, IWEG…TGFL, and FTFL…QAIG. Arginine 165 serves as a coordination point for a 1,2-diacyl-sn-glycero-3-phospho-(1'-sn-glycerol). Transmembrane regions (helical) follow at residues 204–224, 231–249, and 262–282; these read PTFL…SVYF, HGEV…RIVI, and IKAA…GFLI.

Belongs to the Lgt family.

The protein resides in the cell inner membrane. It carries out the reaction L-cysteinyl-[prolipoprotein] + a 1,2-diacyl-sn-glycero-3-phospho-(1'-sn-glycerol) = an S-1,2-diacyl-sn-glyceryl-L-cysteinyl-[prolipoprotein] + sn-glycerol 1-phosphate + H(+). It functions in the pathway protein modification; lipoprotein biosynthesis (diacylglyceryl transfer). Its function is as follows. Catalyzes the transfer of the diacylglyceryl group from phosphatidylglycerol to the sulfhydryl group of the N-terminal cysteine of a prolipoprotein, the first step in the formation of mature lipoproteins. This chain is Phosphatidylglycerol--prolipoprotein diacylglyceryl transferase, found in Thermotoga maritima (strain ATCC 43589 / DSM 3109 / JCM 10099 / NBRC 100826 / MSB8).